Here is a 73-residue protein sequence, read N- to C-terminus: Mu-conotoxin SIIIA (73 aa).

The first 20 residues, 1 to 20, serve as a signal peptide directing secretion; it reads MMSKLGVLLTVCPLLFPLTA. The disordered stretch occupies residues 20–40; the sequence is ALPPDGDQPADRPAERMQDDI. Residues 21–49 constitute a propeptide that is removed on maturation; the sequence is LPPDGDQPADRPAERMQDDISSDEHPLFD. Basic and acidic residues predominate over residues 28-40; the sequence is PADRPAERMQDDI. Glutamine 52 is subject to Pyrrolidone carboxylic acid. 3 cysteine pairs are disulfide-bonded: cysteine 54-cysteine 64, cysteine 55-cysteine 70, and cysteine 59-cysteine 71. Cysteine 71 is subject to Cysteine amide.

It belongs to the conotoxin M superfamily. In terms of tissue distribution, expressed by the venom duct.

Its subcellular location is the secreted. Mu-conotoxins block voltage-gated sodium channels (Nav). This toxin moderately blocks rNav1.1/SCN1A, rNav1.2/SCN2A, rNav1.3/SCN3A, rNav1.4/SCN4A, and mNav1.6/SCN8A. The sequence is that of Mu-conotoxin SIIIA from Conus striatus (Striated cone).